A 209-amino-acid chain; its full sequence is Uracil phosphoribosyltransferase (209 aa).

5-phospho-alpha-D-ribose 1-diphosphate contacts are provided by residues Arg-79, Arg-104, and 131–139 (DPMLATGGS). Residues Ile-194 and 199–201 (GDA) each bind uracil. Asp-200 contacts 5-phospho-alpha-D-ribose 1-diphosphate.

This sequence belongs to the UPRTase family. It depends on Mg(2+) as a cofactor.

The catalysed reaction is UMP + diphosphate = 5-phospho-alpha-D-ribose 1-diphosphate + uracil. It functions in the pathway pyrimidine metabolism; UMP biosynthesis via salvage pathway; UMP from uracil: step 1/1. Allosterically activated by GTP. Functionally, catalyzes the conversion of uracil and 5-phospho-alpha-D-ribose 1-diphosphate (PRPP) to UMP and diphosphate. This Desulfitobacterium hafniense (strain DSM 10664 / DCB-2) protein is Uracil phosphoribosyltransferase.